The chain runs to 293 residues: Phosphate import ATP-binding protein PstB (293 aa).

The ABC transporter domain occupies 46-288; the sequence is MTCRKVDVHY…PGHQLTEDYI (243 aa). Position 78–85 (78–85) interacts with ATP; it reads GPSGCGKS.

Belongs to the ABC transporter superfamily. Phosphate importer (TC 3.A.1.7) family. In terms of assembly, the complex is composed of two ATP-binding proteins (PstB), two transmembrane proteins (PstC and PstA) and a solute-binding protein (PstS).

The protein localises to the cell inner membrane. The enzyme catalyses phosphate(out) + ATP + H2O = ADP + 2 phosphate(in) + H(+). Functionally, part of the ABC transporter complex PstSACB involved in phosphate import. Responsible for energy coupling to the transport system. The protein is Phosphate import ATP-binding protein PstB of Desulfotalea psychrophila (strain LSv54 / DSM 12343).